The chain runs to 541 residues: Formimidoyltransferase-cyclodeaminase (541 aa).

A formiminotransferase N-subdomain region spans residues 1–181 (MSQLVECVPN…GATVTGARKF (181 aa)). The active-site For formimidoyltransferase activity is the H82. 163-172 (GPSSFVPSWG) contacts folate. Residues 182-326 (LIAFNINLLS…PKERIIEYLV (145 aa)) are formiminotransferase C-subdomain. The linker stretch occupies residues 327 to 334 (PDSGPEQS). A cyclodeaminase/cyclohydrolase region spans residues 335–541 (LLDASLRAFV…VLGSLEARKE (207 aa)). D412 functions as the For cyclodeaminase activity in the catalytic mechanism. S520 carries the post-translational modification Phosphoserine.

This sequence in the C-terminal section; belongs to the cyclodeaminase/cyclohydrolase family. It in the N-terminal section; belongs to the formiminotransferase family. In terms of assembly, homooctamer, including four polyglutamate binding sites. The subunits are arranged as a tetramer of dimers, and form a planar ring-shaped structure. Specifically expressed in liver (at protein level).

Its subcellular location is the cytoplasm. The protein localises to the cytosol. It localises to the golgi apparatus. It is found in the cytoskeleton. The protein resides in the microtubule organizing center. Its subcellular location is the centrosome. The protein localises to the centriole. The enzyme catalyses 5-formimidoyltetrahydrofolate + L-glutamate = N-formimidoyl-L-glutamate + (6S)-5,6,7,8-tetrahydrofolate. It carries out the reaction 5-formimidoyltetrahydrofolate + 2 H(+) = (6R)-5,10-methenyltetrahydrofolate + NH4(+). The protein operates within amino-acid degradation; L-histidine degradation into L-glutamate; L-glutamate from N-formimidoyl-L-glutamate (transferase route): step 1/1. In terms of biological role, folate-dependent enzyme, that displays both transferase and deaminase activity. Serves to channel one-carbon units from formiminoglutamate to the folate pool. Its function is as follows. Binds and promotes bundling of vimentin filaments originating from the Golgi. This is Formimidoyltransferase-cyclodeaminase (Ftcd) from Rattus norvegicus (Rat).